A 178-amino-acid polypeptide reads, in one-letter code: ATP-dependent protease subunit HslV (178 aa).

The active site involves Thr7. The Na(+) site is built by Gly162, Cys165, and Thr168.

This sequence belongs to the peptidase T1B family. HslV subfamily. As to quaternary structure, a double ring-shaped homohexamer of HslV is capped on each side by a ring-shaped HslU homohexamer. The assembly of the HslU/HslV complex is dependent on binding of ATP.

The protein resides in the cytoplasm. The catalysed reaction is ATP-dependent cleavage of peptide bonds with broad specificity.. Allosterically activated by HslU binding. Its function is as follows. Protease subunit of a proteasome-like degradation complex believed to be a general protein degrading machinery. This is ATP-dependent protease subunit HslV from Janthinobacterium sp. (strain Marseille) (Minibacterium massiliensis).